Consider the following 330-residue polypeptide: Phenylalanine--tRNA ligase alpha subunit (330 aa).

Glu257 contributes to the Mg(2+) binding site.

The protein belongs to the class-II aminoacyl-tRNA synthetase family. Phe-tRNA synthetase alpha subunit type 1 subfamily. In terms of assembly, tetramer of two alpha and two beta subunits. Mg(2+) is required as a cofactor.

It localises to the cytoplasm. The catalysed reaction is tRNA(Phe) + L-phenylalanine + ATP = L-phenylalanyl-tRNA(Phe) + AMP + diphosphate + H(+). The polypeptide is Phenylalanine--tRNA ligase alpha subunit (Acaryochloris marina (strain MBIC 11017)).